The chain runs to 271 residues: Phosphatidylinositol transfer protein beta isoform (271 aa).

Lys-215 bears the N6-acetyllysine mark. Phosphoserine; by PKC is present on Ser-262.

This sequence belongs to the PtdIns transfer protein family. PI transfer class I subfamily. Constitutive phosphorylation of Ser-262 has no effect on phospholipid transfer activity but is required for Golgi targeting.

Its subcellular location is the golgi apparatus. The protein localises to the golgi apparatus membrane. It localises to the endoplasmic reticulum membrane. It catalyses the reaction a 1,2-diacyl-sn-glycero-3-phosphocholine(in) = a 1,2-diacyl-sn-glycero-3-phosphocholine(out). The enzyme catalyses a 1,2-diacyl-sn-glycero-3-phospho-(1D-myo-inositol)(in) = a 1,2-diacyl-sn-glycero-3-phospho-(1D-myo-inositol)(out). The catalysed reaction is an N-(acyl)-sphingosylphosphocholine(in) = an N-(acyl)-sphingosylphosphocholine(out). Its function is as follows. Catalyzes the transfer of phosphatidylinositol, phosphatidylcholine and sphingomyelin between membranes. Required for COPI-mediated retrograde transport from the Golgi to the endoplasmic reticulum; phosphatidylinositol and phosphatidylcholine transfer activity is essential for this function. The protein is Phosphatidylinositol transfer protein beta isoform (Pitpnb) of Mus musculus (Mouse).